The primary structure comprises 221 residues: Max dimerization protein 1 (221 aa).

The Nuclear localization signal signature appears at 21 to 49 (RREREAEHGYASMLPYNSKERDGLKRKSK). Disordered regions lie at residues 29 to 67 (GYAS…EKNR) and 178 to 221 (SSSS…SIAL). In terms of domain architecture, bHLH spans 55 to 107 (SSRSTHNEMEKNRRAHLRLCLEKLKMLVPLGPESNRHTTLSLLMRAKLHIKKL). Over residues 193 to 221 (MQSICSDEGYSSSGLKSIGLQNNPKSIAL) the composition is skewed to polar residues.

Heterodimer with MAX; the interaction is required for DNA-binding. DNA binding requires dimerization with another bHLH protein; does not form homodimers, and does not bind to DNA in the absence of MAX in vitro. In terms of tissue distribution, expressed primarily in cells that have undergone terminal differentiation including notochord, floor plate and cement gland.

Its subcellular location is the nucleus. Its function is as follows. Component of a transcriptional repressor complex together with MAX. In complex with MAX binds to the core DNA sequence 5'-CAC[GA]TG-3'. Antagonizes MYC transcriptional activity by competing with MYC for MAX binding. Binds to the TERT promoter and represses telomerase expression, possibly by interfering with MYC binding. The polypeptide is Max dimerization protein 1 (mxd1) (Xenopus laevis (African clawed frog)).